A 37-amino-acid polypeptide reads, in one-letter code: Large ribosomal subunit protein bL36 (37 aa).

It belongs to the bacterial ribosomal protein bL36 family.

The protein is Large ribosomal subunit protein bL36 of Halalkalibacterium halodurans (strain ATCC BAA-125 / DSM 18197 / FERM 7344 / JCM 9153 / C-125) (Bacillus halodurans).